We begin with the raw amino-acid sequence, 113 residues long: Large ribosomal subunit protein bL17 (113 aa).

This sequence belongs to the bacterial ribosomal protein bL17 family. In terms of assembly, part of the 50S ribosomal subunit. Contacts protein L32.

The polypeptide is Large ribosomal subunit protein bL17 (Alkaliphilus metalliredigens (strain QYMF)).